Reading from the N-terminus, the 590-residue chain is Protein ecdysoneless homolog (590 aa).

Residues 445–464 (EDFYGVKNSDTDTDSDSLAD) are disordered. The segment covering 455–464 (TDTDSDSLAD) has biased composition (acidic residues).

The protein belongs to the ECD family.

It is found in the cytoplasm. The protein resides in the nucleus. In terms of biological role, involved in the regulation of carbohydrate metabolism. May act as a transcription factor. In Schizosaccharomyces pombe (strain 972 / ATCC 24843) (Fission yeast), this protein is Protein ecdysoneless homolog.